The following is a 267-amino-acid chain: Tryptophan synthase alpha chain (267 aa).

Residues glutamate 49 and aspartate 60 each act as proton acceptor in the active site.

Belongs to the TrpA family. Tetramer of two alpha and two beta chains.

The catalysed reaction is (1S,2R)-1-C-(indol-3-yl)glycerol 3-phosphate + L-serine = D-glyceraldehyde 3-phosphate + L-tryptophan + H2O. Its pathway is amino-acid biosynthesis; L-tryptophan biosynthesis; L-tryptophan from chorismate: step 5/5. In terms of biological role, the alpha subunit is responsible for the aldol cleavage of indoleglycerol phosphate to indole and glyceraldehyde 3-phosphate. This chain is Tryptophan synthase alpha chain, found in Acinetobacter baumannii (strain AB307-0294).